The chain runs to 321 residues: Peptide transport system permease protein SapB (321 aa).

8 helical membrane-spanning segments follow: residues 8–28, 41–61, 82–102, 117–137, 150–170, 180–200, 249–269, and 289–309; these read HILW…VILL, IYIG…GITY, CFIT…ISAV, YVGL…VAAL, LLYE…FMEV, ILQH…MEII, VFTL…WPGI, and VIVI…FTFI. Residues 75–303 enclose the ABC transmembrane type-1 domain; it reads LPPTLELCFI…VCIILIDTFT (229 aa).

It belongs to the binding-protein-dependent transport system permease family. OppBC subfamily.

It is found in the cell inner membrane. In terms of biological role, involved in a peptide intake transport system that plays a role in the resistance to antimicrobial peptides. The chain is Peptide transport system permease protein SapB (sapB) from Haemophilus influenzae (strain ATCC 51907 / DSM 11121 / KW20 / Rd).